A 345-amino-acid polypeptide reads, in one-letter code: Ribosomal RNA small subunit methyltransferase C (345 aa).

This sequence belongs to the methyltransferase superfamily. RsmC family. Monomer.

It is found in the cytoplasm. The catalysed reaction is guanosine(1207) in 16S rRNA + S-adenosyl-L-methionine = N(2)-methylguanosine(1207) in 16S rRNA + S-adenosyl-L-homocysteine + H(+). Functionally, specifically methylates the guanine in position 1207 of 16S rRNA in the 30S particle. This chain is Ribosomal RNA small subunit methyltransferase C, found in Shewanella denitrificans (strain OS217 / ATCC BAA-1090 / DSM 15013).